Here is a 686-residue protein sequence, read N- to C-terminus: Methionine--tRNA ligase (686 aa).

Residues 15-25 (PYANGPIHLGH) carry the 'HIGH' region motif. Positions 146, 149, 159, and 162 each coordinate Zn(2+). The 'KMSKS' region signature appears at 332-336 (KMSKS). Residue Lys-335 coordinates ATP. Positions 585-686 (TFAKTDLRVA…DGAKPGQRIM (102 aa)) constitute a tRNA-binding domain.

It belongs to the class-I aminoacyl-tRNA synthetase family. MetG type 1 subfamily. Homodimer. It depends on Zn(2+) as a cofactor.

Its subcellular location is the cytoplasm. It catalyses the reaction tRNA(Met) + L-methionine + ATP = L-methionyl-tRNA(Met) + AMP + diphosphate. In terms of biological role, is required not only for elongation of protein synthesis but also for the initiation of all mRNA translation through initiator tRNA(fMet) aminoacylation. This chain is Methionine--tRNA ligase, found in Psychromonas ingrahamii (strain DSM 17664 / CCUG 51855 / 37).